The primary structure comprises 304 residues: Acetyl-coenzyme A carboxylase carboxyl transferase subunit beta (304 aa).

The 270-residue stretch at 23–292 (VWTKCDSCGQ…PNPEAPREGV (270 aa)) folds into the CoA carboxyltransferase N-terminal domain. Zn(2+) contacts are provided by Cys27, Cys30, Cys46, and Cys49. The C4-type zinc-finger motif lies at 27 to 49 (CDSCGQVLYRAELERNLEVCPKC). The interval 285–304 (PEAPREGVVVPPVPDQEPEA) is disordered. The segment covering 295–304 (PPVPDQEPEA) has biased composition (pro residues).

The protein belongs to the AccD/PCCB family. In terms of assembly, acetyl-CoA carboxylase is a heterohexamer composed of biotin carboxyl carrier protein (AccB), biotin carboxylase (AccC) and two subunits each of ACCase subunit alpha (AccA) and ACCase subunit beta (AccD). It depends on Zn(2+) as a cofactor.

The protein localises to the cytoplasm. It catalyses the reaction N(6)-carboxybiotinyl-L-lysyl-[protein] + acetyl-CoA = N(6)-biotinyl-L-lysyl-[protein] + malonyl-CoA. Its pathway is lipid metabolism; malonyl-CoA biosynthesis; malonyl-CoA from acetyl-CoA: step 1/1. Component of the acetyl coenzyme A carboxylase (ACC) complex. Biotin carboxylase (BC) catalyzes the carboxylation of biotin on its carrier protein (BCCP) and then the CO(2) group is transferred by the transcarboxylase to acetyl-CoA to form malonyl-CoA. The polypeptide is Acetyl-coenzyme A carboxylase carboxyl transferase subunit beta (Escherichia coli O6:H1 (strain CFT073 / ATCC 700928 / UPEC)).